The following is a 37-amino-acid chain: VGINVKCKHSGQCLKPCKDAGMRFGKCMNGKCDCTPK.

Disulfide bonds link Cys-7/Cys-27, Cys-13/Cys-32, and Cys-17/Cys-34. Residue Lys-37 is modified to Lysine amide.

Belongs to the short scorpion toxin superfamily. Potassium channel inhibitor family. Alpha-KTx 03 subfamily. As to expression, expressed by the venom gland.

It localises to the secreted. In terms of biological role, blocks voltage-gated potassium channels Kv1.1/KCNA1 (IC(50)=203.15 pM), Kv1.2/KCNA2 (IC(50)=8.92 nM) from rat and human Kv1.3 KCNA3/KCNA3 (IC(50)=171 pM) potently. At 2 uM, also blocks Shaker IR and has a moderate effect on rat Kv1.6/KCNA6. This chain is Potassium channel toxin alpha-KTx 3.13, found in Mesobuthus eupeus (Lesser Asian scorpion).